Here is a 544-residue protein sequence, read N- to C-terminus: Chaperonin GroEL 3 (544 aa).

ATP is bound by residues 30–33, K51, 87–91, G415, and D495; these read TLGP and DGTTT.

The protein belongs to the chaperonin (HSP60) family. Forms a cylinder of 14 subunits composed of two heptameric rings stacked back-to-back. Interacts with the co-chaperonin GroES.

It is found in the cytoplasm. It catalyses the reaction ATP + H2O + a folded polypeptide = ADP + phosphate + an unfolded polypeptide.. Its function is as follows. Together with its co-chaperonin GroES, plays an essential role in assisting protein folding. The GroEL-GroES system forms a nano-cage that allows encapsulation of the non-native substrate proteins and provides a physical environment optimized to promote and accelerate protein folding. The sequence is that of Chaperonin GroEL 3 from Psychromonas ingrahamii (strain DSM 17664 / CCUG 51855 / 37).